The sequence spans 329 residues: Cathepsin K (329 aa).

An N-terminal signal peptide occupies residues 1–15; sequence MWGLTVLLLPVVSFA. Residues 16–114 constitute a propeptide, activation peptide; the sequence is LYPEEILDTQ…TLYIPDWEGR (99 aa). N-linked (GlcNAc...) asparagine glycosylation is present at asparagine 103. 3 disulfides stabilise this stretch: cysteine 136-cysteine 177, cysteine 170-cysteine 210, and cysteine 269-cysteine 318. Cysteine 139 is an active-site residue. Residues histidine 276 and asparagine 296 contribute to the active site.

Belongs to the peptidase C1 family.

It localises to the lysosome. The protein localises to the secreted. It is found in the apical cell membrane. It catalyses the reaction Broad proteolytic activity. With small-molecule substrates and inhibitors, the major determinant of specificity is P2, which is preferably Leu, Met &gt; Phe, and not Arg.. Its function is as follows. Thiol protease involved in osteoclastic bone resorption and may participate partially in the disorder of bone remodeling. Displays potent endoprotease activity against fibrinogen at acid pH. May play an important role in extracellular matrix degradation. Involved in the release of thyroid hormone thyroxine (T4) by limited proteolysis of TG/thyroglobulin in the thyroid follicle lumen. The sequence is that of Cathepsin K (CTSK) from Bos taurus (Bovine).